The sequence spans 553 residues: Serine protease 53 (553 aa).

The N-terminal stretch at 1 to 23 (MKWCWGPVLLIAGATVLMEGLQA) is a signal peptide. Peptidase S1 domains lie at 24–273 (AQRA…ARVQ) and 294–526 (VACG…SLDW). A disordered region spans residues 27–46 (ACGQRGPGPPKPQEGNTVPG). Cys62 and Cys78 are joined by a disulfide. Residues His77 and Asp128 each act as charge relay system in the active site. 4 disulfide bridges follow: Cys158–Cys230, Cys187–Cys209, Cys220–Cys249, and Cys326–Cys342. Active-site charge relay system residues include Ser224, His341, and Asp382. Disulfide bonds link Cys444–Cys464 and Cys474–Cys502. Ser478 functions as the Charge relay system in the catalytic mechanism.

Belongs to the peptidase S1 family. As to expression, predominantly detected in testis, liver, heart and ovary, as well as in several tumor cell lines.

It is found in the secreted. In terms of biological role, in vitro can degrade the fibrinogen alpha chain of as well as pro-urokinase-type plasminogen activator. The sequence is that of Serine protease 53 (PRSS53) from Homo sapiens (Human).